Consider the following 342-residue polypeptide: Ribosomal RNA small subunit methyltransferase C (342 aa).

It belongs to the methyltransferase superfamily. RsmC family. As to quaternary structure, monomer.

The protein localises to the cytoplasm. The enzyme catalyses guanosine(1207) in 16S rRNA + S-adenosyl-L-methionine = N(2)-methylguanosine(1207) in 16S rRNA + S-adenosyl-L-homocysteine + H(+). Specifically methylates the guanine in position 1207 of 16S rRNA in the 30S particle. This is Ribosomal RNA small subunit methyltransferase C from Aeromonas hydrophila subsp. hydrophila (strain ATCC 7966 / DSM 30187 / BCRC 13018 / CCUG 14551 / JCM 1027 / KCTC 2358 / NCIMB 9240 / NCTC 8049).